A 346-amino-acid polypeptide reads, in one-letter code: Phosphate acyltransferase (346 aa).

Belongs to the PlsX family. Homodimer. Probably interacts with PlsY.

It localises to the cytoplasm. It carries out the reaction a fatty acyl-[ACP] + phosphate = an acyl phosphate + holo-[ACP]. Its pathway is lipid metabolism; phospholipid metabolism. In terms of biological role, catalyzes the reversible formation of acyl-phosphate (acyl-PO(4)) from acyl-[acyl-carrier-protein] (acyl-ACP). This enzyme utilizes acyl-ACP as fatty acyl donor, but not acyl-CoA. The protein is Phosphate acyltransferase of Geobacter sulfurreducens (strain ATCC 51573 / DSM 12127 / PCA).